Reading from the N-terminus, the 549-residue chain is Oxygen-dependent choline dehydrogenase (549 aa).

4 to 33 is a binding site for FAD; that stretch reads DYIIIGSGSAGSALAHRLSEDSRNSVIVLE. H465 (proton acceptor) is an active-site residue.

The protein belongs to the GMC oxidoreductase family. FAD serves as cofactor.

It carries out the reaction choline + A = betaine aldehyde + AH2. It catalyses the reaction betaine aldehyde + NAD(+) + H2O = glycine betaine + NADH + 2 H(+). It participates in amine and polyamine biosynthesis; betaine biosynthesis via choline pathway; betaine aldehyde from choline (cytochrome c reductase route): step 1/1. In terms of biological role, involved in the biosynthesis of the osmoprotectant glycine betaine. Catalyzes the oxidation of choline to betaine aldehyde and betaine aldehyde to glycine betaine at the same rate. This is Oxygen-dependent choline dehydrogenase from Sinorhizobium fredii (strain NBRC 101917 / NGR234).